Here is a 1157-residue protein sequence, read N- to C-terminus: DNA-directed RNA polymerase subunit beta (1157 aa).

It belongs to the RNA polymerase beta chain family. The RNAP catalytic core consists of 2 alpha, 1 beta, 1 beta' and 1 omega subunit. When a sigma factor is associated with the core the holoenzyme is formed, which can initiate transcription.

The catalysed reaction is RNA(n) + a ribonucleoside 5'-triphosphate = RNA(n+1) + diphosphate. In terms of biological role, DNA-dependent RNA polymerase catalyzes the transcription of DNA into RNA using the four ribonucleoside triphosphates as substrates. The protein is DNA-directed RNA polymerase subunit beta of Tropheryma whipplei (strain TW08/27) (Whipple's bacillus).